The chain runs to 352 residues: Nicotinate-nucleotide--dimethylbenzimidazole phosphoribosyltransferase (352 aa).

Residue E318 is the Proton acceptor of the active site.

Belongs to the CobT family.

It catalyses the reaction 5,6-dimethylbenzimidazole + nicotinate beta-D-ribonucleotide = alpha-ribazole 5'-phosphate + nicotinate + H(+). It functions in the pathway nucleoside biosynthesis; alpha-ribazole biosynthesis; alpha-ribazole from 5,6-dimethylbenzimidazole: step 1/2. In terms of biological role, catalyzes the synthesis of alpha-ribazole-5'-phosphate from nicotinate mononucleotide (NAMN) and 5,6-dimethylbenzimidazole (DMB). The protein is Nicotinate-nucleotide--dimethylbenzimidazole phosphoribosyltransferase of Geotalea uraniireducens (strain Rf4) (Geobacter uraniireducens).